The following is a 384-amino-acid chain: 8-amino-7-oxononanoate synthase (384 aa).

Arg21 lines the substrate pocket. Position 108–109 (108–109 (GF)) interacts with pyridoxal 5'-phosphate. His133 is a binding site for substrate. Pyridoxal 5'-phosphate-binding residues include Ser179, His207, and Thr233. Lys236 is modified (N6-(pyridoxal phosphate)lysine). Thr352 serves as a coordination point for substrate.

Belongs to the class-II pyridoxal-phosphate-dependent aminotransferase family. BioF subfamily. In terms of assembly, homodimer. Pyridoxal 5'-phosphate is required as a cofactor.

It catalyses the reaction 6-carboxyhexanoyl-[ACP] + L-alanine + H(+) = (8S)-8-amino-7-oxononanoate + holo-[ACP] + CO2. Its pathway is cofactor biosynthesis; biotin biosynthesis. Functionally, catalyzes the decarboxylative condensation of pimeloyl-[acyl-carrier protein] and L-alanine to produce 8-amino-7-oxononanoate (AON), [acyl-carrier protein], and carbon dioxide. The sequence is that of 8-amino-7-oxononanoate synthase from Enterobacter sp. (strain 638).